The primary structure comprises 306 residues: Methionyl-tRNA formyltransferase (306 aa).

108 to 111 provides a ligand contact to (6S)-5,6,7,8-tetrahydrofolate; the sequence is SLLP.

Belongs to the Fmt family.

It catalyses the reaction L-methionyl-tRNA(fMet) + (6R)-10-formyltetrahydrofolate = N-formyl-L-methionyl-tRNA(fMet) + (6S)-5,6,7,8-tetrahydrofolate + H(+). Functionally, attaches a formyl group to the free amino group of methionyl-tRNA(fMet). The formyl group appears to play a dual role in the initiator identity of N-formylmethionyl-tRNA by promoting its recognition by IF2 and preventing the misappropriation of this tRNA by the elongation apparatus. This Paenarthrobacter aurescens (strain TC1) protein is Methionyl-tRNA formyltransferase.